Consider the following 113-residue polypeptide: Cytochrome c2 (113 aa).

Residues Cys-15, Cys-18, His-19, and Met-92 each contribute to the heme c site.

This sequence belongs to the cytochrome c family. Post-translationally, binds 1 heme c group covalently per subunit.

Its function is as follows. Cytochrome c2 is found mainly in purple, non-sulfur, photosynthetic bacteria where it functions as the electron donor to the oxidized bacteriochlorophyll in the photophosphorylation pathway. However, it may also have a role in the respiratory chain and is found in some non-photosynthetic bacteria. The protein is Cytochrome c2 of Pararhodospirillum photometricum (Rhodospirillum photometricum).